Consider the following 408-residue polypeptide: Histidine--tRNA ligase (408 aa).

This sequence belongs to the class-II aminoacyl-tRNA synthetase family. Homodimer.

The protein resides in the cytoplasm. It catalyses the reaction tRNA(His) + L-histidine + ATP = L-histidyl-tRNA(His) + AMP + diphosphate + H(+). This Campylobacter jejuni subsp. doylei (strain ATCC BAA-1458 / RM4099 / 269.97) protein is Histidine--tRNA ligase.